The following is a 223-amino-acid chain: Arginine kinase (223 aa).

The Phosphagen kinase C-terminal domain occupies 56 to 222 (FVISTRVRLI…LELIKIEKEM (167 aa)). ATP contacts are provided by residues 59–63 (STRVR) and H68. C141 is a binding site for L-arginine. ATP contacts are provided by residues 150-154 (RASVH) and 175-180 (RGTRGE). An L-arginine-binding site is contributed by E180.

The protein belongs to the ATP:guanido phosphotransferase family.

The enzyme catalyses L-arginine + ATP = N(omega)-phospho-L-arginine + ADP + H(+). This chain is Arginine kinase, found in Chionoecetes opilio (Atlantic snow crab).